The following is a 465-amino-acid chain: Cysteine--tRNA ligase (465 aa).

Residue cysteine 28 participates in Zn(2+) binding. The 'HIGH' region signature appears at 30–40 (MTVYDYCHLGH). 3 residues coordinate Zn(2+): cysteine 209, histidine 234, and glutamate 238. The short motif at 266–270 (KMSKS) is the 'KMSKS' region element. Lysine 269 serves as a coordination point for ATP.

The protein belongs to the class-I aminoacyl-tRNA synthetase family. In terms of assembly, monomer. Requires Zn(2+) as cofactor.

The protein localises to the cytoplasm. The enzyme catalyses tRNA(Cys) + L-cysteine + ATP = L-cysteinyl-tRNA(Cys) + AMP + diphosphate. This Methylococcus capsulatus (strain ATCC 33009 / NCIMB 11132 / Bath) protein is Cysteine--tRNA ligase.